The chain runs to 101 residues: Urease subunit beta (101 aa).

It belongs to the urease beta subunit family. Heterotrimer of UreA (gamma), UreB (beta) and UreC (alpha) subunits. Three heterotrimers associate to form the active enzyme.

Its subcellular location is the cytoplasm. The enzyme catalyses urea + 2 H2O + H(+) = hydrogencarbonate + 2 NH4(+). It functions in the pathway nitrogen metabolism; urea degradation; CO(2) and NH(3) from urea (urease route): step 1/1. This Pseudomonas paraeruginosa (strain DSM 24068 / PA7) (Pseudomonas aeruginosa (strain PA7)) protein is Urease subunit beta.